The sequence spans 210 residues: NAD(P)H-hydrate epimerase (210 aa).

The 200-residue stretch at alanine 11–proline 210 folds into the YjeF N-terminal domain. A (6S)-NADPHX-binding site is contributed by asparagine 60–aspartate 64. 2 residues coordinate K(+): asparagine 61 and aspartate 123. (6S)-NADPHX is bound by residues glycine 127–aspartate 133 and aspartate 156. A K(+)-binding site is contributed by threonine 159.

This sequence belongs to the NnrE/AIBP family. K(+) is required as a cofactor.

It carries out the reaction (6R)-NADHX = (6S)-NADHX. The enzyme catalyses (6R)-NADPHX = (6S)-NADPHX. Its function is as follows. Catalyzes the epimerization of the S- and R-forms of NAD(P)HX, a damaged form of NAD(P)H that is a result of enzymatic or heat-dependent hydration. This is a prerequisite for the S-specific NAD(P)H-hydrate dehydratase to allow the repair of both epimers of NAD(P)HX. The protein is NAD(P)H-hydrate epimerase of Oenococcus oeni (strain ATCC BAA-331 / PSU-1).